The sequence spans 243 residues: Pyridoxine 5'-phosphate synthase (243 aa).

Asparagine 7 lines the 3-amino-2-oxopropyl phosphate pocket. 9-10 (DH) lines the 1-deoxy-D-xylulose 5-phosphate pocket. Arginine 18 lines the 3-amino-2-oxopropyl phosphate pocket. The active-site Proton acceptor is histidine 43. Residues arginine 45 and histidine 50 each coordinate 1-deoxy-D-xylulose 5-phosphate. The active-site Proton acceptor is glutamate 70. A 1-deoxy-D-xylulose 5-phosphate-binding site is contributed by threonine 100. Histidine 191 serves as the catalytic Proton donor. 3-amino-2-oxopropyl phosphate contacts are provided by residues glycine 192 and 213-214 (GH).

It belongs to the PNP synthase family. Homooctamer; tetramer of dimers.

The protein localises to the cytoplasm. It catalyses the reaction 3-amino-2-oxopropyl phosphate + 1-deoxy-D-xylulose 5-phosphate = pyridoxine 5'-phosphate + phosphate + 2 H2O + H(+). It participates in cofactor biosynthesis; pyridoxine 5'-phosphate biosynthesis; pyridoxine 5'-phosphate from D-erythrose 4-phosphate: step 5/5. In terms of biological role, catalyzes the complicated ring closure reaction between the two acyclic compounds 1-deoxy-D-xylulose-5-phosphate (DXP) and 3-amino-2-oxopropyl phosphate (1-amino-acetone-3-phosphate or AAP) to form pyridoxine 5'-phosphate (PNP) and inorganic phosphate. The protein is Pyridoxine 5'-phosphate synthase of Magnetococcus marinus (strain ATCC BAA-1437 / JCM 17883 / MC-1).